Reading from the N-terminus, the 397-residue chain is MKIIDGNIASPLGFSADGLHAGFKKRKKDFGWIVSEVPASVAGVYTTNKVIAAPLIVTRESVKKAQKMQALVVNSGVANSCTGLQGMEDAYTMQKWTATKLKIAPELVGVASTGVIGDLMPMDTLQKGLSKLVVNGNSDDFAQAILTTDTKVKTVAVTEQFGRDEVTMAGVAKGSGMIHPNMATMLAFITCDAVISSETLQLALSQNVETTFNQITVDGDTSTNDMVLVLSNGCTLNKEILPDTPEFDKFSAMLHFVMQELAKKIAKDGEGATKLIEVEVINAPNSLDACMMAKSVVGSSLVKTAIFGEDPNWGRILAAVGYAGVDVPVDNIDIYLADIPVMLASSPVDFDEEDMQDVMRADTIKIIVDLHAGDSVGKAWGCDLSYDYVKINALYRT.

Residues Thr147, Lys173, Thr184, Glu270, Asn392, and Thr397 each contribute to the substrate site. Catalysis depends on Thr184, which acts as the Nucleophile.

Belongs to the ArgJ family. In terms of assembly, heterotetramer of two alpha and two beta chains.

Its subcellular location is the cytoplasm. The catalysed reaction is N(2)-acetyl-L-ornithine + L-glutamate = N-acetyl-L-glutamate + L-ornithine. The enzyme catalyses L-glutamate + acetyl-CoA = N-acetyl-L-glutamate + CoA + H(+). It functions in the pathway amino-acid biosynthesis; L-arginine biosynthesis; L-ornithine and N-acetyl-L-glutamate from L-glutamate and N(2)-acetyl-L-ornithine (cyclic): step 1/1. Its pathway is amino-acid biosynthesis; L-arginine biosynthesis; N(2)-acetyl-L-ornithine from L-glutamate: step 1/4. Functionally, catalyzes two activities which are involved in the cyclic version of arginine biosynthesis: the synthesis of N-acetylglutamate from glutamate and acetyl-CoA as the acetyl donor, and of ornithine by transacetylation between N(2)-acetylornithine and glutamate. This is Arginine biosynthesis bifunctional protein ArgJ from Streptococcus mutans serotype c (strain ATCC 700610 / UA159).